A 654-amino-acid chain; its full sequence is RNA polymerase I-specific transcription initiation factor tif-1A (654 aa).

The interval 1 to 37 is disordered; that stretch reads MKRSTANAPKLSPKHESESDPKKVKLEEEAKPTVNQA. Residues 13 to 31 show a composition bias toward basic and acidic residues; that stretch reads PKHESESDPKKVKLEEEAK.

This sequence belongs to the RRN3 family.

It is found in the nucleus. It localises to the nucleolus. Its function is as follows. Required for efficient transcription initiation by RNA polymerase I (Pol I). The sequence is that of RNA polymerase I-specific transcription initiation factor tif-1A from Caenorhabditis elegans.